Here is a 595-residue protein sequence, read N- to C-terminus: Aspartate--tRNA ligase (595 aa).

E173 contributes to the L-aspartate binding site. The aspartate stretch occupies residues Q197–K200. R219 is an L-aspartate binding site. ATP-binding positions include R219–E221 and Q228. Position 449 (H449) interacts with L-aspartate. An ATP-binding site is contributed by E483. Position 490 (R490) interacts with L-aspartate. Residue G535–R538 coordinates ATP.

It belongs to the class-II aminoacyl-tRNA synthetase family. Type 1 subfamily. In terms of assembly, homodimer.

Its subcellular location is the cytoplasm. It catalyses the reaction tRNA(Asp) + L-aspartate + ATP = L-aspartyl-tRNA(Asp) + AMP + diphosphate. In terms of biological role, catalyzes the attachment of L-aspartate to tRNA(Asp) in a two-step reaction: L-aspartate is first activated by ATP to form Asp-AMP and then transferred to the acceptor end of tRNA(Asp). This is Aspartate--tRNA ligase from Shewanella sediminis (strain HAW-EB3).